The sequence spans 292 residues: Non-homologous end joining protein Ku (292 aa).

In terms of domain architecture, Ku spans 9 to 187 (ITFGLVNVPV…TVPPITEREL (179 aa)). Residues 264-285 (AASAFPAAEKAPAGKNAATASA) are compositionally biased toward low complexity. The interval 264 to 292 (AASAFPAAEKAPAGKNAATASAKKARKLA) is disordered.

This sequence belongs to the prokaryotic Ku family. In terms of assembly, homodimer. Interacts with LigD.

In terms of biological role, with LigD forms a non-homologous end joining (NHEJ) DNA repair enzyme, which repairs dsDNA breaks with reduced fidelity. Binds linear dsDNA with 5'- and 3'- overhangs but not closed circular dsDNA nor ssDNA. Recruits and stimulates the ligase activity of LigD. The sequence is that of Non-homologous end joining protein Ku from Leifsonia xyli subsp. xyli (strain CTCB07).